We begin with the raw amino-acid sequence, 167 residues long: CKLF-like MARVEL transmembrane domain-containing protein 7 (167 aa).

Positions 32–158 (YPLTHGALFK…SLWLSYKITC (127 aa)) constitute an MARVEL domain. The next 4 helical transmembrane spans lie at 35–55 (THGA…FICV), 69–89 (FEVV…VHLF), 102–122 (LSEL…SIVI), and 132–152 (LVAG…SLWL).

Belongs to the chemokine-like factor family.

Its subcellular location is the membrane. This chain is CKLF-like MARVEL transmembrane domain-containing protein 7 (Cmtm7), found in Mus musculus (Mouse).